The following is a 187-amino-acid chain: Abscisic acid receptor PYL9 (187 aa).

Residues His27–Glu178 are START-like. 2 disulfide bridges follow: Cys29-Cys159 and Cys34-Cys159. Residues Lys63, Ala91–Glu96, Arg118–Ser124, and Glu143 each bind abscisate. The short motif at Ser87 to Ala91 is the Gate loop element. Residues His117 to Leu119 carry the Latch loop motif.

It belongs to the PYR/PYL/RCAR abscisic acid intracellular receptor family. In terms of assembly, homodimer. Monomer. Binds ABA on one subunit only. Binds to CARs protein in an ABA-independent manner, both at the plasma membrane and in the nucleus. Binds specifically (+)-ABA but not (-)-ABA. Interacts with HAB1, ABI1 and ABI2, and possibly with other PP2Cs. Interacts with TOPP1. Interacts with DDA1. Expressed in root tips, vascular tissues, stomata, flowers, pollen tubes and developing seeds.

The protein localises to the cytoplasm. Its subcellular location is the nucleus. The protein resides in the cell membrane. Functionally, receptor for abscisic acid (ABA) required for ABA-mediated responses such as stomatal closure and germination inhibition. Inhibits the activity of group-A protein phosphatases type 2C (PP2Cs) in an ABA-independent manner but more efficiently when activated by ABA. Confers enhanced sensitivity to ABA. Can be activated only by (+)-ABA but not by (-)-ABA. This is Abscisic acid receptor PYL9 (PYL9) from Arabidopsis thaliana (Mouse-ear cress).